The primary structure comprises 953 residues: Isoleucine--tRNA ligase (953 aa).

The short motif at 57 to 67 (PYANGDIHIGH) is the 'HIGH' region element. Glu-582 serves as a coordination point for L-isoleucyl-5'-AMP. Residues 623–627 (KMSKS) carry the 'KMSKS' region motif. An ATP-binding site is contributed by Lys-626. Positions 916, 919, 936, and 939 each coordinate Zn(2+).

The protein belongs to the class-I aminoacyl-tRNA synthetase family. IleS type 1 subfamily. As to quaternary structure, monomer. Zn(2+) is required as a cofactor.

It localises to the cytoplasm. The catalysed reaction is tRNA(Ile) + L-isoleucine + ATP = L-isoleucyl-tRNA(Ile) + AMP + diphosphate. Catalyzes the attachment of isoleucine to tRNA(Ile). As IleRS can inadvertently accommodate and process structurally similar amino acids such as valine, to avoid such errors it has two additional distinct tRNA(Ile)-dependent editing activities. One activity is designated as 'pretransfer' editing and involves the hydrolysis of activated Val-AMP. The other activity is designated 'posttransfer' editing and involves deacylation of mischarged Val-tRNA(Ile). The chain is Isoleucine--tRNA ligase from Bordetella pertussis (strain Tohama I / ATCC BAA-589 / NCTC 13251).